The sequence spans 173 residues: Dual-action ribosomal maturation protein DarP (173 aa).

Belongs to the DarP family.

The protein localises to the cytoplasm. In terms of biological role, member of a network of 50S ribosomal subunit biogenesis factors which assembles along the 30S-50S interface, preventing incorrect 23S rRNA structures from forming. Promotes peptidyl transferase center (PTC) maturation. This Pseudomonas syringae pv. tomato (strain ATCC BAA-871 / DC3000) protein is Dual-action ribosomal maturation protein DarP.